The following is a 182-amino-acid chain: MNKQPEDWLDDVPENKNDDDDEIIWVSKSEIKRDAEALKDLGTELVDLGKNALERIPLDEDLLAAIELAQKIKKEGRRRQIQLIGKMLRARDVEPIQTALDKLKNRHNQQVSLFHKLETLRDRLIAEGDDAIPTVLELYPDADRQQLRSLVRNAQKEQAANKPPKSFRQIFSYLRELAEKQQ.

The protein belongs to the DarP family.

It is found in the cytoplasm. Functionally, member of a network of 50S ribosomal subunit biogenesis factors which assembles along the 30S-50S interface, preventing incorrect 23S rRNA structures from forming. Promotes peptidyl transferase center (PTC) maturation. The sequence is that of Dual-action ribosomal maturation protein DarP from Yersinia pseudotuberculosis serotype O:1b (strain IP 31758).